Reading from the N-terminus, the 887-residue chain is Alanine--tRNA ligase (887 aa).

H563, H567, C677, and H681 together coordinate Zn(2+).

It belongs to the class-II aminoacyl-tRNA synthetase family. Zn(2+) is required as a cofactor.

It is found in the cytoplasm. The enzyme catalyses tRNA(Ala) + L-alanine + ATP = L-alanyl-tRNA(Ala) + AMP + diphosphate. Functionally, catalyzes the attachment of alanine to tRNA(Ala) in a two-step reaction: alanine is first activated by ATP to form Ala-AMP and then transferred to the acceptor end of tRNA(Ala). Also edits incorrectly charged Ser-tRNA(Ala) and Gly-tRNA(Ala) via its editing domain. The protein is Alanine--tRNA ligase of Dinoroseobacter shibae (strain DSM 16493 / NCIMB 14021 / DFL 12).